We begin with the raw amino-acid sequence, 413 residues long: Serine hydroxymethyltransferase (413 aa).

(6S)-5,6,7,8-tetrahydrofolate is bound by residues Leu-119 and Gly-123 to Leu-125. Lys-228 is subject to N6-(pyridoxal phosphate)lysine.

The protein belongs to the SHMT family. In terms of assembly, homodimer. Pyridoxal 5'-phosphate is required as a cofactor.

The protein localises to the cytoplasm. It carries out the reaction (6R)-5,10-methylene-5,6,7,8-tetrahydrofolate + glycine + H2O = (6S)-5,6,7,8-tetrahydrofolate + L-serine. It functions in the pathway one-carbon metabolism; tetrahydrofolate interconversion. It participates in amino-acid biosynthesis; glycine biosynthesis; glycine from L-serine: step 1/1. Catalyzes the reversible interconversion of serine and glycine with tetrahydrofolate (THF) serving as the one-carbon carrier. This reaction serves as the major source of one-carbon groups required for the biosynthesis of purines, thymidylate, methionine, and other important biomolecules. Also exhibits THF-independent aldolase activity toward beta-hydroxyamino acids, producing glycine and aldehydes, via a retro-aldol mechanism. The protein is Serine hydroxymethyltransferase of Caldanaerobacter subterraneus subsp. tengcongensis (strain DSM 15242 / JCM 11007 / NBRC 100824 / MB4) (Thermoanaerobacter tengcongensis).